A 226-amino-acid polypeptide reads, in one-letter code: 7-cyano-7-deazaguanine synthase (226 aa).

An ATP-binding site is contributed by 12–22; that stretch reads LSGGLDSATVV. Residues Cys191, Cys201, Cys204, and Cys207 each contribute to the Zn(2+) site.

Belongs to the QueC family. Zn(2+) is required as a cofactor.

It catalyses the reaction 7-carboxy-7-deazaguanine + NH4(+) + ATP = 7-cyano-7-deazaguanine + ADP + phosphate + H2O + H(+). It participates in purine metabolism; 7-cyano-7-deazaguanine biosynthesis. Catalyzes the ATP-dependent conversion of 7-carboxy-7-deazaguanine (CDG) to 7-cyano-7-deazaguanine (preQ(0)). This chain is 7-cyano-7-deazaguanine synthase, found in Pseudomonas syringae pv. tomato (strain ATCC BAA-871 / DC3000).